The primary structure comprises 507 residues: Ribose import ATP-binding protein RbsA 2 (507 aa).

2 ABC transporter domains span residues 7-245 (FSLD…VGRN) and 249-498 (LFTR…MPQS). ATP is bound at residue 39–46 (GENGAGKS).

The protein belongs to the ABC transporter superfamily. Ribose importer (TC 3.A.1.2.1) family. In terms of assembly, the complex is composed of an ATP-binding protein (RbsA), two transmembrane proteins (RbsC) and a solute-binding protein (RbsB).

The protein localises to the cell inner membrane. It carries out the reaction D-ribose(out) + ATP + H2O = D-ribose(in) + ADP + phosphate + H(+). Part of the ABC transporter complex RbsABC involved in ribose import. Responsible for energy coupling to the transport system. The sequence is that of Ribose import ATP-binding protein RbsA 2 from Mesorhizobium japonicum (strain LMG 29417 / CECT 9101 / MAFF 303099) (Mesorhizobium loti (strain MAFF 303099)).